The following is a 219-amino-acid chain: 2-hydroxy-3-keto-5-methylthiopentenyl-1-phosphate phosphatase (219 aa).

This sequence belongs to the HAD-like hydrolase superfamily. MtnX family.

It catalyses the reaction 2-hydroxy-5-methylsulfanyl-3-oxopent-1-enyl phosphate + H2O = 1,2-dihydroxy-5-(methylsulfanyl)pent-1-en-3-one + phosphate. Its pathway is amino-acid biosynthesis; L-methionine biosynthesis via salvage pathway; L-methionine from S-methyl-5-thio-alpha-D-ribose 1-phosphate: step 4/6. Its function is as follows. Dephosphorylates 2-hydroxy-3-keto-5-methylthiopentenyl-1-phosphate (HK-MTPenyl-1-P) yielding 1,2-dihydroxy-3-keto-5-methylthiopentene (DHK-MTPene). The chain is 2-hydroxy-3-keto-5-methylthiopentenyl-1-phosphate phosphatase from Bacillus cereus (strain G9842).